A 50-amino-acid polypeptide reads, in one-letter code: Small ribosomal subunit protein eS31 (50 aa).

Zn(2+) is bound by residues Cys22, Cys25, Cys40, and Cys43. The C4-type zinc-finger motif lies at 22–43; the sequence is CPRCGPGVFMADHGDRWACGKC.

Belongs to the eukaryotic ribosomal protein eS31 family. Part of the 30S ribosomal subunit. The cofactor is Zn(2+).

This chain is Small ribosomal subunit protein eS31, found in Pyrococcus furiosus (strain ATCC 43587 / DSM 3638 / JCM 8422 / Vc1).